A 256-amino-acid polypeptide reads, in one-letter code: Protein FixA (256 aa).

This sequence belongs to the ETF beta-subunit/FixA family. In terms of assembly, heterodimer of FixA and FixB.

It functions in the pathway amine and polyamine metabolism; carnitine metabolism. Required for anaerobic carnitine reduction. May bring reductant to CaiA. In Escherichia coli O81 (strain ED1a), this protein is Protein FixA.